The chain runs to 432 residues: Enolase (432 aa).

Residue Gln-167 coordinates (2R)-2-phosphoglycerate. Residue Glu-209 is the Proton donor of the active site. Mg(2+) contacts are provided by Asp-246, Glu-291, and Asp-318. (2R)-2-phosphoglycerate contacts are provided by Lys-343, Arg-372, Ser-373, and Lys-394. Catalysis depends on Lys-343, which acts as the Proton acceptor.

It belongs to the enolase family. As to quaternary structure, component of the RNA degradosome, a multiprotein complex involved in RNA processing and mRNA degradation. Requires Mg(2+) as cofactor.

It is found in the cytoplasm. It localises to the secreted. Its subcellular location is the cell surface. It carries out the reaction (2R)-2-phosphoglycerate = phosphoenolpyruvate + H2O. Its pathway is carbohydrate degradation; glycolysis; pyruvate from D-glyceraldehyde 3-phosphate: step 4/5. Its function is as follows. Catalyzes the reversible conversion of 2-phosphoglycerate (2-PG) into phosphoenolpyruvate (PEP). It is essential for the degradation of carbohydrates via glycolysis. This chain is Enolase, found in Aliivibrio fischeri (strain MJ11) (Vibrio fischeri).